The sequence spans 215 residues: Cytochrome b6 (215 aa).

Residues 32-52 (IFYCLGGITLTCFLVQVATGF) form a helical membrane-spanning segment. Cys35 lines the heme c pocket. Heme b-binding residues include His86 and His100. 3 helical membrane passes run 90-110 (ASMM…TGGF), 116-136 (LTWV…VTGY), and 186-206 (LHTF…FLMI). His187 and His202 together coordinate heme b.

Belongs to the cytochrome b family. PetB subfamily. In terms of assembly, the 4 large subunits of the cytochrome b6-f complex are cytochrome b6, subunit IV (17 kDa polypeptide, PetD), cytochrome f and the Rieske protein, while the 4 small subunits are PetG, PetL, PetM and PetN. The complex functions as a dimer. It depends on heme b as a cofactor. Heme c is required as a cofactor.

The protein resides in the plastid. It is found in the chloroplast thylakoid membrane. Functionally, component of the cytochrome b6-f complex, which mediates electron transfer between photosystem II (PSII) and photosystem I (PSI), cyclic electron flow around PSI, and state transitions. In Citrus sinensis (Sweet orange), this protein is Cytochrome b6.